The sequence spans 663 residues: DNA topoisomerase 4 subunit B (663 aa).

ATP-binding positions include Tyr-21, Asn-61, Asp-88, 130–136, and Lys-360; that span reads GLHGVGI. Residues 440-554 enclose the Toprim domain; that stretch reads TELFIVEGDS…EGHLYLAKPP (115 aa). Positions 446, 519, and 521 each coordinate Mg(2+).

It belongs to the type II topoisomerase family. ParE type 1 subfamily. In terms of assembly, heterotetramer composed of ParC and ParE. Requires Mg(2+) as cofactor. Mn(2+) serves as cofactor. Ca(2+) is required as a cofactor.

It catalyses the reaction ATP-dependent breakage, passage and rejoining of double-stranded DNA.. Its function is as follows. Topoisomerase IV is essential for chromosome segregation. It relaxes supercoiled DNA. Performs the decatenation events required during the replication of a circular DNA molecule. In Rickettsia typhi (strain ATCC VR-144 / Wilmington), this protein is DNA topoisomerase 4 subunit B.